A 272-amino-acid chain; its full sequence is MSIYTNSKPWTVPALAEAKRNGSKIVMLTAYDAGFARILDANGVDLILVGDSLGMVVQGHDSTLPVSVHDMVYHTACVARGVRHAMLVVDLPFQADASPERALEAATALLRVGAQMIKIEGAGHKLEVISYLVEREIPVCSHLGLTPQSVLRFGGYKVQGRGEEAGGRLRAEARAAVEAGATLLLLECVPSQLAAQITTDASVPTIGIGAGAGCDGQVLVLHDLLGLDSGHPRPKFVKDFLAHGGSVAGAVRAYANAVRDGSFPDVEHTYTS.

Residues D51 and D90 each coordinate Mg(2+). 3-methyl-2-oxobutanoate contacts are provided by residues 51–52, D90, and K118; that span reads DS. E120 is a binding site for Mg(2+). Residue E187 is the Proton acceptor of the active site.

Belongs to the PanB family. As to quaternary structure, homodecamer; pentamer of dimers. It depends on Mg(2+) as a cofactor.

Its subcellular location is the cytoplasm. It catalyses the reaction 3-methyl-2-oxobutanoate + (6R)-5,10-methylene-5,6,7,8-tetrahydrofolate + H2O = 2-dehydropantoate + (6S)-5,6,7,8-tetrahydrofolate. It functions in the pathway cofactor biosynthesis; (R)-pantothenate biosynthesis; (R)-pantoate from 3-methyl-2-oxobutanoate: step 1/2. In terms of biological role, catalyzes the reversible reaction in which hydroxymethyl group from 5,10-methylenetetrahydrofolate is transferred onto alpha-ketoisovalerate to form ketopantoate. The sequence is that of 3-methyl-2-oxobutanoate hydroxymethyltransferase from Xylella fastidiosa (strain M23).